A 189-amino-acid chain; its full sequence is Elongation factor P (189 aa).

Belongs to the elongation factor P family.

Its subcellular location is the cytoplasm. The protein operates within protein biosynthesis; polypeptide chain elongation. Involved in peptide bond synthesis. Stimulates efficient translation and peptide-bond synthesis on native or reconstituted 70S ribosomes in vitro. Probably functions indirectly by altering the affinity of the ribosome for aminoacyl-tRNA, thus increasing their reactivity as acceptors for peptidyl transferase. The protein is Elongation factor P of Onion yellows phytoplasma (strain OY-M).